Consider the following 356-residue polypeptide: Protein-glutamate methylesterase/protein-glutamine glutaminase 2 (356 aa).

Residues 4–121 (KVLIVDDSAV…KGFLEESSHE (118 aa)) form the Response regulatory domain. A 4-aspartylphosphate modification is found at Asp-55. In terms of domain architecture, CheB-type methylesterase spans 169–356 (FATTERIIAI…LELIAKAICR (188 aa)). Active-site residues include Ser-181, His-207, and Asp-303.

It belongs to the CheB family. Post-translationally, phosphorylated by CheA. Phosphorylation of the N-terminal regulatory domain activates the methylesterase activity.

The protein localises to the cytoplasm. The enzyme catalyses [protein]-L-glutamate 5-O-methyl ester + H2O = L-glutamyl-[protein] + methanol + H(+). It carries out the reaction L-glutaminyl-[protein] + H2O = L-glutamyl-[protein] + NH4(+). Functionally, involved in chemotaxis. Part of a chemotaxis signal transduction system that modulates chemotaxis in response to various stimuli. Catalyzes the demethylation of specific methylglutamate residues introduced into the chemoreceptors (methyl-accepting chemotaxis proteins or MCP) by CheR. Also mediates the irreversible deamidation of specific glutamine residues to glutamic acid. The polypeptide is Protein-glutamate methylesterase/protein-glutamine glutaminase 2 (Chromobacterium violaceum (strain ATCC 12472 / DSM 30191 / JCM 1249 / CCUG 213 / NBRC 12614 / NCIMB 9131 / NCTC 9757 / MK)).